The primary structure comprises 606 residues: Urocanate reductase (606 aa).

The segment at residues 1–40 (MSNLSRRNFITGGAIAALGGTLAIAGCAPKGESSSTVAGA) is a signal peptide (tat-type signal). Threonine 111 bears the FMN phosphoryl threonine mark. FAD-binding residues include alanine 163, glutamate 182, threonine 191, glycine 195, glycine 196, alanine 197, alanine 305, and aspartate 373. Arginine 433 (proton donor) is an active-site residue. The FAD site is built by glutamate 572 and isoleucine 588.

This sequence belongs to the FAD-dependent oxidoreductase 2 family. FRD/SDH subfamily. FAD is required as a cofactor. It depends on FMN as a cofactor. Predicted to be exported by the Tat system. The position of the signal peptide cleavage has not been experimentally proven.

It catalyses the reaction dihydrourocanate + A = urocanate + AH2. Its function is as follows. Catalyzes the two-electron reduction of urocanate to dihydrourocanate (also named imidazole propionate or deamino-histidine). Dihydrourocanate is present at higher concentrations in subjects with type 2 diabetes, and directly impairs glucose tolerance and insulin signaling at the level of insulin receptor substrate (IRS) through activation of p38 gamma (MAPK12)-p62-mTORC1. Therefore, the UrdA enzyme from the gut bacteria E.lenta strain DSM 2243 may contribute to the pathogenesis of type 2 diabetes by producing the microbial metabolite dihydrourocanate. This Eggerthella lenta (strain ATCC 25559 / DSM 2243 / CCUG 17323 / JCM 9979 / KCTC 3265 / NCTC 11813 / VPI 0255 / 1899 B) (Eubacterium lentum) protein is Urocanate reductase.